A 1456-amino-acid chain; its full sequence is DNA polymerase gamma, mitochondrial (1456 aa).

The N-terminal 41 residues, 1-41, are a transit peptide targeting the mitochondrion; that stretch reads MLTPVRCRTVPNATVATAARVLRRANLFSRYPRQLGHLRWD. 2 disordered regions span residues 1200–1266 and 1308–1443; these read APEM…SLDD and AVTT…SWKP. The span at 1204 to 1239 shows a compositional bias: low complexity; sequence AAVPSTSSESKSKASATTSTTTTENATASPSSSSNV. A compositionally biased stretch (pro residues) spans 1315–1325; the sequence is PEPPTNPPPVA. 2 stretches are compositionally biased toward low complexity: residues 1346 to 1371 and 1411 to 1428; these read PKNP…TPKP and TASV…ATAT.

This sequence belongs to the DNA polymerase type-A family. Requires Mg(2+) as cofactor.

Its subcellular location is the mitochondrion. The catalysed reaction is DNA(n) + a 2'-deoxyribonucleoside 5'-triphosphate = DNA(n+1) + diphosphate. In terms of biological role, involved in the replication of mitochondrial DNA. The polypeptide is DNA polymerase gamma, mitochondrial (mip-1) (Neurospora crassa (strain ATCC 24698 / 74-OR23-1A / CBS 708.71 / DSM 1257 / FGSC 987)).